The sequence spans 136 residues: Putative pre-16S rRNA nuclease (136 aa).

Belongs to the YqgF nuclease family.

Its subcellular location is the cytoplasm. Could be a nuclease involved in processing of the 5'-end of pre-16S rRNA. In Francisella tularensis subsp. novicida (strain U112), this protein is Putative pre-16S rRNA nuclease.